We begin with the raw amino-acid sequence, 96 residues long: Large ribosomal subunit protein bL25 (96 aa).

Belongs to the bacterial ribosomal protein bL25 family. Part of the 50S ribosomal subunit; part of the 5S rRNA/L5/L18/L25 subcomplex. Contacts the 5S rRNA. Binds to the 5S rRNA independently of L5 and L18.

Functionally, this is one of the proteins that binds to the 5S RNA in the ribosome where it forms part of the central protuberance. The polypeptide is Large ribosomal subunit protein bL25 (Francisella philomiragia subsp. philomiragia (strain ATCC 25017 / CCUG 19701 / FSC 153 / O#319-036)).